Reading from the N-terminus, the 147-residue chain is Pathogenesis-related protein PR-4A (147 aa).

The first 25 residues, 1–25 (MERVNNYKLCVALLIISMVMAMAAA), serve as a signal peptide directing secretion. The 122-residue stretch at 26 to 147 (QSATNVRSTY…VNYEFVNCND (122 aa)) folds into the Barwin domain. Cystine bridges form between cysteine 54–cysteine 86, cysteine 75–cysteine 109, and cysteine 89–cysteine 145.

The protein localises to the secreted. The protein resides in the cell wall. In Nicotiana tabacum (Common tobacco), this protein is Pathogenesis-related protein PR-4A.